The following is a 434-amino-acid chain: RNA polymerase II holoenzyme cyclin-like subunit (434 aa).

The Cyclin N-terminal domain occupies 23-155 (EARRRVLLLE…LIEEMDSYLL (133 aa)). Positions 248–278 (GSSTNPININNNNNTNTSNNNGTTSTTTTTT) are enriched in low complexity. Disordered stretches follow at residues 248–292 (GSST…DNTE), 301–320 (LTKSSNNSQDKSDDKMDIDN), and 330–362 (QIQNQTQHQHQESTHNNTSSTNTGRNGINGQIS). Positions 330-359 (QIQNQTQHQHQESTHNNTSSTNTGRNGING) are enriched in low complexity.

Belongs to the cyclin family. Cyclin C subfamily. Component of the SRB8-11 complex, a regulatory module of the Mediator complex.

The protein localises to the nucleus. Functionally, component of the SRB8-11 complex. The SRB8-11 complex is a regulatory module of the Mediator complex which is itself involved in regulation of basal and activated RNA polymerase II-dependent transcription. The SRB8-11 complex may be involved in the transcriptional repression of a subset of genes regulated by Mediator. It may inhibit the association of the Mediator complex with RNA polymerase II to form the holoenzyme complex. The SRB8-11 complex phosphorylates the C-terminal domain (CTD) of the largest subunit of RNA polymerase II. The sequence is that of RNA polymerase II holoenzyme cyclin-like subunit (SSN8) from Candida albicans (strain SC5314 / ATCC MYA-2876) (Yeast).